The sequence spans 271 residues: MAAEEPQQQKQEPLGSDSEGVNCLAYDEAIMAQQDRIQQEIAVQNPLVSERLELSVLYKEYAEDDNIYQQKIKDLHKKYSYIRKTRPDGNCFYRAFGFSHLEALLDDSKELQRFKAVSAKSKEDLVSQGFTEFTIEDFHNTFMDLIEQVEKQTSVADLLASFNDQSTSDYLVVYLRLLTSGYLQRESKFFEHFIEGGRTVKEFCQQEVEPMCKESDHIHIIALAQALSVSIQVEYMDRGEGGTTNPHIFPEGSEPKVYLLYRPGHYDILYK.

Position 2 is an N-acetylalanine (Ala-2). Ser-16 carries the post-translational modification Phosphoserine. At Tyr-26 the chain carries Phosphotyrosine; by SRC. Residues 80–271 (SYIRKTRPDG…RPGHYDILYK (192 aa)) form the OTU domain. The active site involves Asp-88. Catalysis depends on Cys-91, which acts as the Nucleophile. Ubiquitin-conjugating enzyme E2 binding regions lie at residues 130 to 138 (FTEFTIEDF) and 169 to 177 (DYLVVYLRL). The tract at residues 189-195 (FFEHFIE) is free ubiquitin binding. Residues 206-213 (QEVEPMCK) are ubiquitin-conjugating enzyme E2 binding. Free ubiquitin binding regions lie at residues 214–221 (ESDHIHII) and 245–251 (NPHIFPE). His-265 is an active-site residue.

It belongs to the peptidase C65 family. As to quaternary structure, interacts with FUS and RACK1. Interacts with UBE2D1/UBCH5A, UBE2W/UBC16 and UBE2N/UBC13. Interacts with RNF128. Forms a ternary complex with RNF128 and USP8. Interacts with the C-terminal UCH catalytic domain of USP8. In terms of assembly, interacts with RNF128. Does not associate with USP8. Phosphorylation at Tyr-26 by SRC and SRMS promotes deubiquitination of RPTOR via a non-catalytic process. Isoform 1 is ubiquitous. Isoform 2 is expressed only in lymphoid tissues such as tonsils, lymph nodes and spleen, as well as peripheral blood mononuclear cells.

It is found in the cytoplasm. The catalysed reaction is Thiol-dependent hydrolysis of ester, thioester, amide, peptide and isopeptide bonds formed by the C-terminal Gly of ubiquitin (a 76-residue protein attached to proteins as an intracellular targeting signal).. Its activity is regulated as follows. By free ubiquitin: binding of free ubiquitin triggers conformational changes in the OTU domain and formation of a ubiquitin-binding helix in the N-terminus, promoting binding of the conjugated donor ubiquitin in UBE2N/UBC13 to OTUB1. Its function is as follows. Hydrolase that can specifically remove 'Lys-48'-linked conjugated ubiquitin from proteins and plays an important regulatory role at the level of protein turnover by preventing degradation. Regulator of T-cell anergy, a phenomenon that occurs when T-cells are rendered unresponsive to antigen rechallenge and no longer respond to their cognate antigen. Acts via its interaction with RNF128/GRAIL, a crucial inductor of CD4 T-cell anergy. Isoform 1 destabilizes RNF128, leading to prevent anergy. In contrast, isoform 2 stabilizes RNF128 and promotes anergy. Surprisingly, it regulates RNF128-mediated ubiquitination, but does not deubiquitinate polyubiquitinated RNF128. Deubiquitinates estrogen receptor alpha (ESR1). Mediates deubiquitination of 'Lys-48'-linked polyubiquitin chains, but not 'Lys-63'-linked polyubiquitin chains. Not able to cleave di-ubiquitin. Also capable of removing NEDD8 from NEDD8 conjugates, but with a much lower preference compared to 'Lys-48'-linked ubiquitin. Functionally, plays a key non-catalytic role in DNA repair regulation by inhibiting activity of RNF168, an E3 ubiquitin-protein ligase that promotes accumulation of 'Lys-63'-linked histone H2A and H2AX at DNA damage sites. Inhibits RNF168 independently of ubiquitin thioesterase activity by binding and inhibiting UBE2N/UBC13, the E2 partner of RNF168, thereby limiting spreading of 'Lys-63'-linked histone H2A and H2AX marks. Inhibition occurs by binding to free ubiquitin: free ubiquitin acts as an allosteric regulator that increases affinity for UBE2N/UBC13 and disrupts interaction with UBE2V1. The OTUB1-UBE2N/UBC13-free ubiquitin complex adopts a configuration that mimics a cleaved 'Lys48'-linked di-ubiquitin chain. Acts as a regulator of mTORC1 and mTORC2 complexes. When phosphorylated at Tyr-26, acts as an activator of the mTORC1 complex by mediating deubiquitination of RPTOR via a non-catalytic process: acts by binding and inhibiting the activity of the ubiquitin-conjugating enzyme E2 (UBE2D1/UBCH5A, UBE2W/UBC16 and UBE2N/UBC13), thereby preventing ubiquitination of RPTOR. Can also act as an inhibitor of the mTORC1 and mTORC2 complexes in response to amino acids by mediating non-catalytic deubiquitination of DEPTOR. This is Ubiquitin thioesterase OTUB1 (OTUB1) from Homo sapiens (Human).